The chain runs to 257 residues: Tryptophan synthase alpha chain (257 aa).

Active-site proton acceptor residues include E46 and D57.

Belongs to the TrpA family. Tetramer of two alpha and two beta chains.

It catalyses the reaction (1S,2R)-1-C-(indol-3-yl)glycerol 3-phosphate + L-serine = D-glyceraldehyde 3-phosphate + L-tryptophan + H2O. The protein operates within amino-acid biosynthesis; L-tryptophan biosynthesis; L-tryptophan from chorismate: step 5/5. In terms of biological role, the alpha subunit is responsible for the aldol cleavage of indoleglycerol phosphate to indole and glyceraldehyde 3-phosphate. This chain is Tryptophan synthase alpha chain, found in Parabacteroides distasonis (strain ATCC 8503 / DSM 20701 / CIP 104284 / JCM 5825 / NCTC 11152).